A 183-amino-acid chain; its full sequence is Endoribonuclease YbeY (183 aa).

Positions 143, 147, and 153 each coordinate Zn(2+).

This sequence belongs to the endoribonuclease YbeY family. Zn(2+) is required as a cofactor.

The protein resides in the cytoplasm. In terms of biological role, single strand-specific metallo-endoribonuclease involved in late-stage 70S ribosome quality control and in maturation of the 3' terminus of the 16S rRNA. This is Endoribonuclease YbeY from Rickettsia bellii (strain RML369-C).